We begin with the raw amino-acid sequence, 143 residues long: Nucleoside diphosphate kinase 2 (143 aa).

Residues lysine 11, phenylalanine 59, arginine 87, threonine 93, arginine 104, and asparagine 114 each contribute to the ATP site. The active-site Pros-phosphohistidine intermediate is the histidine 117.

The protein belongs to the NDK family. In terms of assembly, homotetramer. Mg(2+) is required as a cofactor.

It is found in the cytoplasm. It catalyses the reaction a 2'-deoxyribonucleoside 5'-diphosphate + ATP = a 2'-deoxyribonucleoside 5'-triphosphate + ADP. It carries out the reaction a ribonucleoside 5'-diphosphate + ATP = a ribonucleoside 5'-triphosphate + ADP. Major role in the synthesis of nucleoside triphosphates other than ATP. The ATP gamma phosphate is transferred to the NDP beta phosphate via a ping-pong mechanism, using a phosphorylated active-site intermediate. The sequence is that of Nucleoside diphosphate kinase 2 from Protochlamydia amoebophila (strain UWE25).